The chain runs to 502 residues: Aspartyl/glutamyl-tRNA(Asn/Gln) amidotransferase subunit B (502 aa).

Belongs to the GatB/GatE family. GatB subfamily. As to quaternary structure, heterotrimer of A, B and C subunits.

The enzyme catalyses L-glutamyl-tRNA(Gln) + L-glutamine + ATP + H2O = L-glutaminyl-tRNA(Gln) + L-glutamate + ADP + phosphate + H(+). It catalyses the reaction L-aspartyl-tRNA(Asn) + L-glutamine + ATP + H2O = L-asparaginyl-tRNA(Asn) + L-glutamate + ADP + phosphate + 2 H(+). Functionally, allows the formation of correctly charged Asn-tRNA(Asn) or Gln-tRNA(Gln) through the transamidation of misacylated Asp-tRNA(Asn) or Glu-tRNA(Gln) in organisms which lack either or both of asparaginyl-tRNA or glutaminyl-tRNA synthetases. The reaction takes place in the presence of glutamine and ATP through an activated phospho-Asp-tRNA(Asn) or phospho-Glu-tRNA(Gln). The protein is Aspartyl/glutamyl-tRNA(Asn/Gln) amidotransferase subunit B of Arthrobacter sp. (strain FB24).